Here is a 554-residue protein sequence, read N- to C-terminus: Dihydroxy-acid dehydratase (554 aa).

Residue Asp-78 participates in Mg(2+) binding. [2Fe-2S] cluster is bound at residue Cys-119. Residues Asp-120 and Lys-121 each coordinate Mg(2+). Lys-121 bears the N6-carboxylysine mark. Cys-191 serves as a coordination point for [2Fe-2S] cluster. Glu-444 contacts Mg(2+). Ser-470 (proton acceptor) is an active-site residue.

This sequence belongs to the IlvD/Edd family. As to quaternary structure, homodimer. [2Fe-2S] cluster is required as a cofactor. The cofactor is Mg(2+).

It carries out the reaction (2R)-2,3-dihydroxy-3-methylbutanoate = 3-methyl-2-oxobutanoate + H2O. The enzyme catalyses (2R,3R)-2,3-dihydroxy-3-methylpentanoate = (S)-3-methyl-2-oxopentanoate + H2O. It functions in the pathway amino-acid biosynthesis; L-isoleucine biosynthesis; L-isoleucine from 2-oxobutanoate: step 3/4. The protein operates within amino-acid biosynthesis; L-valine biosynthesis; L-valine from pyruvate: step 3/4. In terms of biological role, functions in the biosynthesis of branched-chain amino acids. Catalyzes the dehydration of (2R,3R)-2,3-dihydroxy-3-methylpentanoate (2,3-dihydroxy-3-methylvalerate) into 2-oxo-3-methylpentanoate (2-oxo-3-methylvalerate) and of (2R)-2,3-dihydroxy-3-methylbutanoate (2,3-dihydroxyisovalerate) into 2-oxo-3-methylbutanoate (2-oxoisovalerate), the penultimate precursor to L-isoleucine and L-valine, respectively. This chain is Dihydroxy-acid dehydratase, found in Nitratidesulfovibrio vulgaris (strain ATCC 29579 / DSM 644 / CCUG 34227 / NCIMB 8303 / VKM B-1760 / Hildenborough) (Desulfovibrio vulgaris).